A 382-amino-acid chain; its full sequence is Type 2 DNA topoisomerase 6 subunit A (382 aa).

The Topo IIA-type catalytic domain occupies Tyr-14–Tyr-155. Tyr-108 (O-(5'-phospho-DNA)-tyrosine intermediate) is an active-site residue. Mg(2+)-binding residues include Glu-202 and Asp-254.

It belongs to the TOP6A family. Homodimer. Heterotetramer of two Top6A and two Top6B chains. Requires Mg(2+) as cofactor.

The catalysed reaction is ATP-dependent breakage, passage and rejoining of double-stranded DNA.. Functionally, relaxes both positive and negative superturns and exhibits a strong decatenase activity. In Pyrococcus horikoshii (strain ATCC 700860 / DSM 12428 / JCM 9974 / NBRC 100139 / OT-3), this protein is Type 2 DNA topoisomerase 6 subunit A.